Consider the following 276-residue polypeptide: NAD-capped RNA hydrolase NudC (276 aa).

Residue Arg-82 participates in substrate binding. The Zn(2+) site is built by Cys-112 and Cys-115. Substrate is bound at residue Glu-125. Positions 130 and 133 each coordinate Zn(2+). A substrate-binding site is contributed by Tyr-138. Positions 139–262 constitute a Nudix hydrolase domain; the sequence is PRISPSMIVL…SIARYLIDLY (124 aa). Positions 172, 188, and 192 each coordinate a divalent metal cation. The Nudix box signature appears at 173–194; sequence GFAEPGESAEDCLVREVREEVA. 206–213 serves as a coordination point for substrate; the sequence is QCWPFPHS. Glu-233 provides a ligand contact to a divalent metal cation. Ala-255 serves as a coordination point for substrate.

This sequence belongs to the Nudix hydrolase family. NudC subfamily. Homodimer. Mg(2+) serves as cofactor. It depends on Mn(2+) as a cofactor. Requires Zn(2+) as cofactor.

The enzyme catalyses a 5'-end NAD(+)-phospho-ribonucleoside in mRNA + H2O = a 5'-end phospho-adenosine-phospho-ribonucleoside in mRNA + beta-nicotinamide D-ribonucleotide + 2 H(+). The catalysed reaction is NAD(+) + H2O = beta-nicotinamide D-ribonucleotide + AMP + 2 H(+). It catalyses the reaction NADH + H2O = reduced beta-nicotinamide D-ribonucleotide + AMP + 2 H(+). Functionally, mRNA decapping enzyme that specifically removes the nicotinamide adenine dinucleotide (NAD) cap from a subset of mRNAs by hydrolyzing the diphosphate linkage to produce nicotinamide mononucleotide (NMN) and 5' monophosphate mRNA. The NAD-cap is present at the 5'-end of some mRNAs and stabilizes RNA against 5'-processing. Has preference for mRNAs with a 5'-end purine. Catalyzes the hydrolysis of a broad range of dinucleotide pyrophosphates. This chain is NAD-capped RNA hydrolase NudC, found in Pseudomonas putida (strain GB-1).